The following is a 776-amino-acid chain: Venom dipeptidyl peptidase 4 (776 aa).

Positions 1-25 are cleaved as a signal peptide; the sequence is MVPLRSFVLLNSLFLVLLAARTVVT. 3 N-linked (GlcNAc...) asparagine glycosylation sites follow: Asn-44, Asn-66, and Asn-329. Cystine bridges form between Cys-449–Cys-452 and Cys-462–Cys-480. N-linked (GlcNAc...) asparagine glycosylation is found at Asn-504 and Asn-577. Catalysis depends on Ser-638, which acts as the Charge relay system. The cysteines at positions 658 and 769 are disulfide-linked. Residues Asn-688 and Asn-693 are each glycosylated (N-linked (GlcNAc...) asparagine). Residues Asp-717 and His-749 each act as charge relay system in the active site.

This sequence belongs to the peptidase S9B family. DPPIV subfamily. Expressed by the venom gland.

The protein resides in the secreted. The enzyme catalyses Release of an N-terminal dipeptide, Xaa-Yaa-|-Zaa-, from a polypeptide, preferentially when Yaa is Pro, provided Zaa is neither Pro nor hydroxyproline.. With respect to regulation, inhibited by diprotin A. Its function is as follows. Venom dipeptidyl-peptidase which removes N-terminal dipeptides sequentially from polypeptides having unsubstituted N-termini provided that the penultimate residue is proline. May process venom proteins into their active forms and/or modulate the chemotactic activity of immune cells after the insect sting. This is Venom dipeptidyl peptidase 4 from Vespula vulgaris (Yellow jacket).